A 253-amino-acid polypeptide reads, in one-letter code: PAXIP1-associated glutamate-rich protein 1 (253 aa).

Disordered stretches follow at residues 1-109 and 128-253; these read MSLV…MPPP and QAEI…QRKY. Basic and acidic residues predominate over residues 51–62; it reads EGGREEAEHEGS. Residues 116–160 form a sufficient for interaction with NCOA1 region; that stretch reads YELLAAHGTLELQAEILPRRPPTPEAQSEEERSDEEPEAKEEEEE. Phosphothreonine is present on Thr138. The span at 142–159 shows a compositional bias: acidic residues; it reads QSEEERSDEEPEAKEEEE. Residues Ser143 and Ser148 each carry the phosphoserine modification. The interval 161-253 is sufficient for interaction with ESR1; the sequence is KPHMPTEFDF…GSLFPRQRKY (93 aa). Positions 195 to 223 are enriched in basic and acidic residues; it reads QKREARLDKVLSDMKRHKKLEEQILRTGR. At Ser237 the chain carries Phosphoserine.

In terms of assembly, component of the KMT2 family MLL2/MLL3 complex, at least composed of the histone methyltransferases KMT2D and/or KMT2C, the common complex subunits ASH2L, RBBP5, WDR5 and DPY30, and the complex type-specific subunits PAXIP1/PTIP, PAGR1, NCOA6 and KDM6A; PAXIP1 is required for the association with the MLL2/MLL3 complex. Forms a constitutive complex with PAXIP1/PTIP independently of the MLL2/MLL3 complex. Interacts with NCOA1, ESR1, NR3C1, AR.

The protein resides in the nucleus. Functionally, its association with the histone methyltransferase MLL2/MLL3 complex is suggesting a role in epigenetic transcriptional activation. However, in association with PAXIP1/PTIP is proposed to function at least in part independently of the MLL2/MLL3 complex. Proposed to be recruited by PAXIP1 to sites of DNA damage where the PAGR1:PAXIP1 complex is required for cell survival in response to DNA damage independently of the MLL2/MLL3 complex. However, its function in DNA damage has been questioned. During immunoglobulin class switching in activated B-cells is involved in transcription regulation of downstream switch regions at the immunoglobulin heavy-chain (Igh) locus independently of the MLL2/MLL3 complex. Involved in both estrogen receptor-regulated gene transcription and estrogen-stimulated G1/S cell-cycle transition. Acts as a transcriptional cofactor for nuclear hormone receptors. Inhibits the induction properties of several steroid receptors such as NR3C1, AR and PPARG; the mechanism of inhibition appears to be gene-dependent. The sequence is that of PAXIP1-associated glutamate-rich protein 1 (PAGR1) from Bos taurus (Bovine).